Here is a 194-residue protein sequence, read N- to C-terminus: Threonylcarbamoyl-AMP synthase (194 aa).

One can recognise a YrdC-like domain in the interval 11–194; it reads FRNLMKIINA…GINYKIIRKG (184 aa).

The protein belongs to the SUA5 family. TsaC subfamily.

The protein localises to the cytoplasm. It carries out the reaction L-threonine + hydrogencarbonate + ATP = L-threonylcarbamoyladenylate + diphosphate + H2O. Required for the formation of a threonylcarbamoyl group on adenosine at position 37 (t(6)A37) in tRNAs that read codons beginning with adenine. Catalyzes the conversion of L-threonine, HCO(3)(-)/CO(2) and ATP to give threonylcarbamoyl-AMP (TC-AMP) as the acyladenylate intermediate, with the release of diphosphate. The polypeptide is Threonylcarbamoyl-AMP synthase (Wigglesworthia glossinidia brevipalpis).